The following is a 754-amino-acid chain: tRNA 5-methylaminomethyl-2-thiouridine biosynthesis bifunctional protein MnmC (754 aa).

Residues 1–320 are tRNA (mnm(5)s(2)U34)-methyltransferase; that stretch reads MPSCYEHSAQ…RRQAVNNSDS (320 aa). Residues 324–754 form an FAD-dependent cmnm(5)s(2)U34 oxidoreductase region; that stretch reads IGGGIAGACL…RKLLKGKALC (431 aa).

This sequence in the N-terminal section; belongs to the methyltransferase superfamily. tRNA (mnm(5)s(2)U34)-methyltransferase family. It in the C-terminal section; belongs to the DAO family. Requires FAD as cofactor.

The protein resides in the cytoplasm. The catalysed reaction is 5-aminomethyl-2-thiouridine(34) in tRNA + S-adenosyl-L-methionine = 5-methylaminomethyl-2-thiouridine(34) in tRNA + S-adenosyl-L-homocysteine + H(+). In terms of biological role, catalyzes the last two steps in the biosynthesis of 5-methylaminomethyl-2-thiouridine (mnm(5)s(2)U) at the wobble position (U34) in tRNA. Catalyzes the FAD-dependent demodification of cmnm(5)s(2)U34 to nm(5)s(2)U34, followed by the transfer of a methyl group from S-adenosyl-L-methionine to nm(5)s(2)U34, to form mnm(5)s(2)U34. This chain is tRNA 5-methylaminomethyl-2-thiouridine biosynthesis bifunctional protein MnmC, found in Shewanella denitrificans (strain OS217 / ATCC BAA-1090 / DSM 15013).